Here is a 144-residue protein sequence, read N- to C-terminus: Bacilliredoxin BLi02323/BL05224 (144 aa).

It belongs to the bacilliredoxin family.

In Bacillus licheniformis (strain ATCC 14580 / DSM 13 / JCM 2505 / CCUG 7422 / NBRC 12200 / NCIMB 9375 / NCTC 10341 / NRRL NRS-1264 / Gibson 46), this protein is Bacilliredoxin BLi02323/BL05224.